The sequence spans 85 residues: U4-theraphotoxin-Hhn1u (85 aa).

The signal sequence occupies residues Met1–Ala22. Residues Glu23–Arg48 constitute a propeptide that is removed on maturation. Cystine bridges form between Cys52-Cys66, Cys56-Cys77, and Cys71-Cys82.

Belongs to the neurotoxin 12 (Hwtx-2) family. 02 (Hwtx-2) subfamily. In terms of tissue distribution, expressed by the venom gland.

The protein localises to the secreted. In terms of biological role, postsynaptic neurotoxin. This chain is U4-theraphotoxin-Hhn1u, found in Cyriopagopus hainanus (Chinese bird spider).